We begin with the raw amino-acid sequence, 634 residues long: Replication protein E1 (634 aa).

Residues 85 to 87 (KRK) carry the Nuclear localization signal motif. A phosphoserine; by host mark is found at Ser91 and Ser95. The interval 92 to 117 (PRSSPLGDITNQNNTHSHSQANESQV) is disordered. The span at 100 to 115 (ITNQNNTHSHSQANES) shows a compositional bias: polar residues. The tract at residues 172–338 (CANVELNSIC…QTQLQHSFED (167 aa)) is DNA-binding region. Residues 437 to 587 (VNFMSFIQMF…FPFDNNGNAV (151 aa)) form the SF3 helicase domain. 463–470 (GPPNTGKS) lines the ATP pocket.

This sequence belongs to the papillomaviridae E1 protein family. Can form hexamers. Interacts with E2 protein; this interaction increases E1 DNA binding specificity. Interacts with host DNA polymerase subunit POLA2. Interacts with host single stranded DNA-binding protein RPA1. Interacts with host TOP1; this interaction stimulates the enzymatic activity of TOP1. Phosphorylated.

Its subcellular location is the host nucleus. The enzyme catalyses Couples ATP hydrolysis with the unwinding of duplex DNA by translocating in the 3'-5' direction.. It carries out the reaction ATP + H2O = ADP + phosphate + H(+). In terms of biological role, ATP-dependent DNA 3'-5' helicase required for initiation of viral DNA replication. It forms a complex with the viral E2 protein. The E1-E2 complex binds to the replication origin which contains binding sites for both proteins. During the initial step, a dimer of E1 interacts with a dimer of protein E2 leading to a complex that binds the viral origin of replication with high specificity. Then, a second dimer of E1 displaces the E2 dimer in an ATP-dependent manner to form the E1 tetramer. Following this, two E1 monomers are added to each half of the site, which results in the formation of two E1 trimers on the viral ori. Subsequently, two hexamers will be created. The double hexamer acts as a bi-directional helicase machinery and unwinds the viral DNA and then recruits the host DNA polymerase to start replication. In Homo sapiens (Human), this protein is Replication protein E1.